We begin with the raw amino-acid sequence, 425 residues long: UDP-N-acetylglucosamine 1-carboxyvinyltransferase (425 aa).

Residue Lys-25–Asn-26 coordinates phosphoenolpyruvate. Arg-95 provides a ligand contact to UDP-N-acetyl-alpha-D-glucosamine. The active-site Proton donor is Cys-119. The residue at position 119 (Cys-119) is a 2-(S-cysteinyl)pyruvic acid O-phosphothioketal. UDP-N-acetyl-alpha-D-glucosamine is bound by residues Arg-124–Gln-128, Asp-306, and Ile-328.

Belongs to the EPSP synthase family. MurA subfamily.

The protein localises to the cytoplasm. It carries out the reaction phosphoenolpyruvate + UDP-N-acetyl-alpha-D-glucosamine = UDP-N-acetyl-3-O-(1-carboxyvinyl)-alpha-D-glucosamine + phosphate. Its pathway is cell wall biogenesis; peptidoglycan biosynthesis. Its function is as follows. Cell wall formation. Adds enolpyruvyl to UDP-N-acetylglucosamine. The protein is UDP-N-acetylglucosamine 1-carboxyvinyltransferase of Thermus thermophilus (strain ATCC 27634 / DSM 579 / HB8).